Here is a 676-residue protein sequence, read N- to C-terminus: Urocanate hydratase (676 aa).

The disordered stretch occupies residues 15 to 35; sequence PLPENRGRQAGVPHAPVRTPS. Residues 126–127, Gln-204, 251–253, Glu-271, 317–318, 343–347, 354–355, Tyr-403, and Gly-594 contribute to the NAD(+) site; these read GG, GMS, NV, QTSCH, and YY.

It belongs to the urocanase family. NAD(+) is required as a cofactor.

The catalysed reaction is 4-imidazolone-5-propanoate = trans-urocanate + H2O. The protein operates within amino-acid degradation; L-histidine degradation into L-glutamate; N-formimidoyl-L-glutamate from L-histidine: step 2/3. In Homo sapiens (Human), this protein is Urocanate hydratase (UROC1).